The following is a 529-amino-acid chain: Peptide chain release factor 3 (529 aa).

The tr-type G domain occupies 11 to 280; sequence AKRRTFAIIS…GLVEWAPAPM (270 aa). Residues 20-27, 88-92, and 142-145 contribute to the GTP site; these read SHPDAGKT, DTPGH, and NKLD.

It belongs to the TRAFAC class translation factor GTPase superfamily. Classic translation factor GTPase family. PrfC subfamily.

It localises to the cytoplasm. In terms of biological role, increases the formation of ribosomal termination complexes and stimulates activities of RF-1 and RF-2. It binds guanine nucleotides and has strong preference for UGA stop codons. It may interact directly with the ribosome. The stimulation of RF-1 and RF-2 is significantly reduced by GTP and GDP, but not by GMP. This chain is Peptide chain release factor 3, found in Salmonella arizonae (strain ATCC BAA-731 / CDC346-86 / RSK2980).